The following is a 361-amino-acid chain: MLCLGIESSCDETALALVEDGRLLHSVLSTQADMHALFGGVVPELASREHYRYIGPLFDELMRRSDKSNEEIDLVAVARGPGLLGSLLVGVAFAKGLAFSLGARFLGVNHLQAHLLAAGLEQPLKFPALGLLVSGGHTHLYRMETPWNCLPLGRTLDDAAGEAFDKVGKVLGLAYPGGRLMDALAGEGRADGIAFPRPYLDNDNLDFSFSGLKTAASTYVQQHFAGMTWPRPLGSTAAAPQELKDCCAAFNLAVVDTLCTKATRALDRNPQLKYLILAGGVACNSLLRQRVTELMERRGGQAIIPGPHLCTDNAAMIAYAGWLLGKEGYYHQLNMETVPRGRALPDDMRRCREYAEDLSET.

Residues histidine 110 and histidine 114 each contribute to the Fe cation site. Substrate contacts are provided by residues 132–136, aspartate 165, glycine 178, aspartate 182, and asparagine 284; that span reads LVSGG. Aspartate 312 is a Fe cation binding site.

This sequence belongs to the KAE1 / TsaD family. It depends on Fe(2+) as a cofactor.

Its subcellular location is the cytoplasm. The enzyme catalyses L-threonylcarbamoyladenylate + adenosine(37) in tRNA = N(6)-L-threonylcarbamoyladenosine(37) in tRNA + AMP + H(+). In terms of biological role, required for the formation of a threonylcarbamoyl group on adenosine at position 37 (t(6)A37) in tRNAs that read codons beginning with adenine. Is involved in the transfer of the threonylcarbamoyl moiety of threonylcarbamoyl-AMP (TC-AMP) to the N6 group of A37, together with TsaE and TsaB. TsaD likely plays a direct catalytic role in this reaction. This is tRNA N6-adenosine threonylcarbamoyltransferase from Desulfovibrio desulfuricans (strain ATCC 27774 / DSM 6949 / MB).